Here is a 550-residue protein sequence, read N- to C-terminus: Probable importin subunit alpha-A (550 aa).

The span at M1–N30 shows a compositional bias: basic and acidic residues. Positions M1–I34 are disordered. An IBB domain is found at M1–T56. ARM repeat units follow at residues Y116 to S155, N158 to G198, V201 to L241, K256 to D297, N300 to T339, S342 to A381, S385 to N424, and T428 to K467.

Belongs to the importin alpha family. Forms a complex with tnpo/importin subunit beta.

The protein localises to the cytoplasm. The protein resides in the nucleus envelope. Functionally, functions in nuclear protein import via a substrate-importin alpha-beta transport complex that passes though the nuclear pore complexes (NPC). Binds specifically and directly to substrates containing either a simple or bipartite NLS motif. The chain is Probable importin subunit alpha-A from Dictyostelium discoideum (Social amoeba).